The primary structure comprises 301 residues: Protein KTI12 homolog (301 aa).

ATP is bound at residue 8-15; sequence GQPCSGKS. Residues 262 to 275 are calmodulin-binding; sequence LRRTFIKLAGQYSL.

It belongs to the KTI12 family. Interacts with the elongator complex. Binds to calmodulin in a calcium-dependent manner.

Its subcellular location is the cytoplasm. The protein resides in the nucleus. In terms of biological role, elongator complex-associated factor that is not a structural subunit but rather transiently contacts the complex. Regulates both meristem activity and organ growth; acts as a positive regulator of adaxial leaf patterning. Required for an early step in synthesis of 5-carbamoylmethyl (ncm5) groups present on uridines (ncm5U) at the wobble position in tRNA. This is Protein KTI12 homolog from Oryza sativa subsp. indica (Rice).